We begin with the raw amino-acid sequence, 377 residues long: Homoserine O-succinyltransferase (377 aa).

The AB hydrolase-1 domain occupies 50–359 (NAVLVCHALS…SSHGHDSFLM (310 aa)). The active-site Nucleophile is serine 156. Position 226 (arginine 226) interacts with substrate. Active-site residues include aspartate 321 and histidine 354. Aspartate 355 is a substrate binding site.

This sequence belongs to the AB hydrolase superfamily. MetX family. As to quaternary structure, homodimer.

It is found in the cytoplasm. The catalysed reaction is L-homoserine + succinyl-CoA = O-succinyl-L-homoserine + CoA. Its pathway is amino-acid biosynthesis; L-methionine biosynthesis via de novo pathway; O-succinyl-L-homoserine from L-homoserine: step 1/1. Its function is as follows. Transfers a succinyl group from succinyl-CoA to L-homoserine, forming succinyl-L-homoserine. In Nitrosospira multiformis (strain ATCC 25196 / NCIMB 11849 / C 71), this protein is Homoserine O-succinyltransferase.